The following is a 283-amino-acid chain: Glutamate racemase (283 aa).

Substrate is bound by residues 28–29 (DS) and 60–61 (YG). Cys92 acts as the Proton donor/acceptor in catalysis. 93–94 (NS) serves as a coordination point for substrate. The active-site Proton donor/acceptor is the Cys204. 205–206 (TH) is a substrate binding site.

It belongs to the aspartate/glutamate racemases family.

The enzyme catalyses L-glutamate = D-glutamate. The protein operates within cell wall biogenesis; peptidoglycan biosynthesis. In terms of biological role, provides the (R)-glutamate required for cell wall biosynthesis. The chain is Glutamate racemase from Erwinia tasmaniensis (strain DSM 17950 / CFBP 7177 / CIP 109463 / NCPPB 4357 / Et1/99).